The following is a 1333-amino-acid chain: DNA-directed RNA polymerase subunit beta' (1333 aa).

Residues Cys60, Cys62, Cys75, and Cys78 each contribute to the Zn(2+) site. Mg(2+) contacts are provided by Asp535, Asp537, and Asp539. Positions 901, 983, 990, and 993 each coordinate Zn(2+).

This sequence belongs to the RNA polymerase beta' chain family. In terms of assembly, the RNAP catalytic core consists of 2 alpha, 1 beta, 1 beta' and 1 omega subunit. When a sigma factor is associated with the core the holoenzyme is formed, which can initiate transcription. It depends on Mg(2+) as a cofactor. Requires Zn(2+) as cofactor.

It carries out the reaction RNA(n) + a ribonucleoside 5'-triphosphate = RNA(n+1) + diphosphate. DNA-dependent RNA polymerase catalyzes the transcription of DNA into RNA using the four ribonucleoside triphosphates as substrates. This chain is DNA-directed RNA polymerase subunit beta', found in Corynebacterium glutamicum (strain R).